A 150-amino-acid polypeptide reads, in one-letter code: Ribonuclease H (150 aa).

The RNase H type-1 domain maps to 3–144 (GEDIVEIYTD…ADALARQGMA (142 aa)). Residues Asp12, Glu50, Asp72, and Asp136 each contribute to the Mg(2+) site.

Belongs to the RNase H family. In terms of assembly, monomer. Mg(2+) is required as a cofactor.

The protein resides in the cytoplasm. The enzyme catalyses Endonucleolytic cleavage to 5'-phosphomonoester.. Functionally, endonuclease that specifically degrades the RNA of RNA-DNA hybrids. The polypeptide is Ribonuclease H (Parvibaculum lavamentivorans (strain DS-1 / DSM 13023 / NCIMB 13966)).